We begin with the raw amino-acid sequence, 258 residues long: UPF0246 protein YaaA (258 aa).

Belongs to the UPF0246 family.

In Escherichia coli (strain SE11), this protein is UPF0246 protein YaaA.